The following is a 306-amino-acid chain: tRNA dimethylallyltransferase (306 aa).

Residue glycine 13–threonine 20 coordinates ATP. Threonine 15–threonine 20 provides a ligand contact to substrate. 2 interaction with substrate tRNA regions span residues aspartate 38–glutamine 41 and glutamine 161–arginine 165.

Belongs to the IPP transferase family. In terms of assembly, monomer. Requires Mg(2+) as cofactor.

The catalysed reaction is adenosine(37) in tRNA + dimethylallyl diphosphate = N(6)-dimethylallyladenosine(37) in tRNA + diphosphate. Catalyzes the transfer of a dimethylallyl group onto the adenine at position 37 in tRNAs that read codons beginning with uridine, leading to the formation of N6-(dimethylallyl)adenosine (i(6)A). The protein is tRNA dimethylallyltransferase of Maridesulfovibrio salexigens (strain ATCC 14822 / DSM 2638 / NCIMB 8403 / VKM B-1763) (Desulfovibrio salexigens).